A 159-amino-acid polypeptide reads, in one-letter code: Protein-export protein SecB (159 aa).

This sequence belongs to the SecB family. Homotetramer, a dimer of dimers. One homotetramer interacts with 1 SecA dimer.

It localises to the cytoplasm. Functionally, one of the proteins required for the normal export of preproteins out of the cell cytoplasm. It is a molecular chaperone that binds to a subset of precursor proteins, maintaining them in a translocation-competent state. It also specifically binds to its receptor SecA. This is Protein-export protein SecB from Hahella chejuensis (strain KCTC 2396).